Reading from the N-terminus, the 206-residue chain is UPF0502 protein Acid_1185 (206 aa).

This sequence belongs to the UPF0502 family.

The polypeptide is UPF0502 protein Acid_1185 (Solibacter usitatus (strain Ellin6076)).